Here is a 134-residue protein sequence, read N- to C-terminus: U34-theraphotoxin-Cg1a (134 aa).

Residues 1 to 19 form the signal peptide; sequence MKLAVVFLLTTVVFTLAQS. 3 cysteine pairs are disulfide-bonded: C24–C35, C29–C53, and C63–C84. The interval 97-134 is disordered; it reads EQSSTSTSSTQGPITSSTVTTQSEATTETETTTAAEGK. Low complexity predominate over residues 99–134; it reads SSTSTSSTQGPITSSTVTTQSEATTETETTTAAEGK.

Belongs to the neurotoxin 32 family. Expressed by the venom gland.

It is found in the secreted. The chain is U34-theraphotoxin-Cg1a from Chilobrachys guangxiensis (Chinese earth tiger tarantula).